The primary structure comprises 342 residues: S-adenosylmethionine:tRNA ribosyltransferase-isomerase (342 aa).

It belongs to the QueA family. Monomer.

It localises to the cytoplasm. The enzyme catalyses 7-aminomethyl-7-carbaguanosine(34) in tRNA + S-adenosyl-L-methionine = epoxyqueuosine(34) in tRNA + adenine + L-methionine + 2 H(+). It functions in the pathway tRNA modification; tRNA-queuosine biosynthesis. In terms of biological role, transfers and isomerizes the ribose moiety from AdoMet to the 7-aminomethyl group of 7-deazaguanine (preQ1-tRNA) to give epoxyqueuosine (oQ-tRNA). In Streptococcus pneumoniae (strain Hungary19A-6), this protein is S-adenosylmethionine:tRNA ribosyltransferase-isomerase.